The primary structure comprises 507 residues: Inactive alanine aminotransferase (507 aa).

5 residues coordinate pyridoxal 5'-phosphate: alanine 173, serine 174, tyrosine 199, asparagine 255, and serine 324. Residue lysine 327 is modified to N6-(pyridoxal phosphate)lysine. Residue arginine 336 coordinates pyridoxal 5'-phosphate.

The protein belongs to the class-I pyridoxal-phosphate-dependent aminotransferase family. Alanine aminotransferase subfamily. As to quaternary structure, homodimer. It depends on pyridoxal 5'-phosphate as a cofactor.

The protein localises to the cytoplasm. Its subcellular location is the nucleus. In terms of biological role, inactive alanine aminotransferase. Forms a catalytically active Schiff base with PLP, but lacks alanine transaminase activity, probably due to an altered structural conformation of the dimeric enzyme. This suggests this protein may have a yet undiscovered physiological function. The sequence is that of Inactive alanine aminotransferase (ALT2) from Saccharomyces cerevisiae (strain ATCC 204508 / S288c) (Baker's yeast).